The following is a 409-amino-acid chain: Argininosuccinate synthase (409 aa).

9–17 contributes to the ATP binding site; it reads AYSGGLDTS. Position 86 (Tyr-86) interacts with L-citrulline. Residue Gly-116 coordinates ATP. The L-aspartate site is built by Thr-118, Asn-122, and Asp-123. Asn-122 serves as a coordination point for L-citrulline. Residues Arg-126, Ser-174, Ser-183, Glu-259, and Tyr-271 each contribute to the L-citrulline site.

It belongs to the argininosuccinate synthase family. Type 1 subfamily. Homotetramer.

It is found in the cytoplasm. It catalyses the reaction L-citrulline + L-aspartate + ATP = 2-(N(omega)-L-arginino)succinate + AMP + diphosphate + H(+). Its pathway is amino-acid biosynthesis; L-arginine biosynthesis; L-arginine from L-ornithine and carbamoyl phosphate: step 2/3. The chain is Argininosuccinate synthase from Halalkalibacterium halodurans (strain ATCC BAA-125 / DSM 18197 / FERM 7344 / JCM 9153 / C-125) (Bacillus halodurans).